Consider the following 650-residue polypeptide: ATP-dependent zinc metalloprotease FtsH (650 aa).

Topologically, residues 1-10 (MKTKKSKSTL) are cytoplasmic. Residues 11-31 (WFWLIILLAIIVTIIIIAVTV) traverse the membrane as a helical segment. Residues 32–123 (KGTTQVISDA…LVYQGSVGMA (92 aa)) lie on the Extracellular side of the membrane. A helical membrane pass occupies residues 124 to 144 (LLVSLAPLLIYVLLFGGIIWF). The Cytoplasmic segment spans residues 145 to 650 (MMKSSSGAGA…DIKVEDLDID (506 aa)). 217 to 224 (GPPGTGKT) contributes to the ATP binding site. H437 is a Zn(2+) binding site. E438 is an active-site residue. 2 residues coordinate Zn(2+): H441 and D515.

In the central section; belongs to the AAA ATPase family. This sequence in the C-terminal section; belongs to the peptidase M41 family. In terms of assembly, homohexamer. Zn(2+) serves as cofactor.

Its subcellular location is the cell membrane. Acts as a processive, ATP-dependent zinc metallopeptidase for both cytoplasmic and membrane proteins. Plays a role in the quality control of integral membrane proteins. This is ATP-dependent zinc metalloprotease FtsH from Mesoplasma florum (strain ATCC 33453 / NBRC 100688 / NCTC 11704 / L1) (Acholeplasma florum).